Here is a 165-residue protein sequence, read N- to C-terminus: Transcription antitermination protein NusB (165 aa).

The protein belongs to the NusB family.

Functionally, involved in transcription antitermination. Required for transcription of ribosomal RNA (rRNA) genes. Binds specifically to the boxA antiterminator sequence of the ribosomal RNA (rrn) operons. This chain is Transcription antitermination protein NusB, found in Chlorobium phaeobacteroides (strain DSM 266 / SMG 266 / 2430).